Here is a 339-residue protein sequence, read N- to C-terminus: Cathepsin L (339 aa).

The signal sequence occupies residues 1-17 (MRTVLVALLALVALTQA). The propeptide at 18–121 (ISPLDLIKEE…ATYIPPAHVT (104 aa)) is activation peptide. The N-linked (GlcNAc...) asparagine glycan is linked to N96. Disulfide bonds link C143–C186, C177–C219, and C278–C328. C146 is a catalytic residue. The active site involves H285. A propeptide spanning residues 295–298 (DESG) is cleaved from the precursor. Residue N306 is part of the active site.

The protein belongs to the peptidase C1 family. In terms of assembly, dimer of a heavy and a light chain linked by disulfide bonds.

The protein resides in the lysosome. The enzyme catalyses Specificity close to that of papain. As compared to cathepsin B, cathepsin L exhibits higher activity toward protein substrates, but has little activity on Z-Arg-Arg-NHMec, and no peptidyl-dipeptidase activity.. In terms of biological role, important for the overall degradation of proteins in lysosomes. Required for differentiation of imaginal disks. The polypeptide is Cathepsin L (Sarcophaga peregrina (Flesh fly)).